An 821-amino-acid polypeptide reads, in one-letter code: Leucine--tRNA ligase (821 aa).

The 'HIGH' region motif lies at 40-50; it reads PYPSGRIHMGH. The short motif at 586-590 is the 'KMSKS' region element; it reads KMSKS. Position 589 (Lys589) interacts with ATP.

The protein belongs to the class-I aminoacyl-tRNA synthetase family.

The protein localises to the cytoplasm. It catalyses the reaction tRNA(Leu) + L-leucine + ATP = L-leucyl-tRNA(Leu) + AMP + diphosphate. This chain is Leucine--tRNA ligase, found in Aliarcobacter butzleri (strain RM4018) (Arcobacter butzleri).